A 75-amino-acid polypeptide reads, in one-letter code: Small ribosomal subunit protein eS28 (75 aa).

The protein belongs to the eukaryotic ribosomal protein eS28 family.

This chain is Small ribosomal subunit protein eS28, found in Natronomonas pharaonis (strain ATCC 35678 / DSM 2160 / CIP 103997 / JCM 8858 / NBRC 14720 / NCIMB 2260 / Gabara) (Halobacterium pharaonis).